A 530-amino-acid chain; its full sequence is UDP-glucuronosyltransferase 2B17 (530 aa).

An N-terminal signal peptide occupies residues 1-23 (MSLKWMSVFLLMQLSCYFSSGSC). Asparagine 65 carries an N-linked (GlcNAc...) asparagine glycan. At lysine 136 the chain carries N6-succinyllysine. Residues asparagine 316 and asparagine 483 are each glycosylated (N-linked (GlcNAc...) asparagine). A helical membrane pass occupies residues 495 to 515 (IAFLLACVATMIFMITKCCLF).

Belongs to the UDP-glycosyltransferase family. As to expression, expressed in various tissues including the liver, kidney, testis, uterus, placenta, mammary gland, adrenal gland, skin and prostate.

The protein resides in the endoplasmic reticulum membrane. It carries out the reaction glucuronate acceptor + UDP-alpha-D-glucuronate = acceptor beta-D-glucuronoside + UDP + H(+). It catalyses the reaction 17alpha-estradiol + UDP-alpha-D-glucuronate = 17alpha-estradiol 3-O-(beta-D-glucuronate) + UDP + H(+). The enzyme catalyses 17alpha-estradiol + UDP-alpha-D-glucuronate = 17alpha-estradiol 17-O-(beta-D-glucuronate) + UDP + H(+). The catalysed reaction is 17beta-estradiol + UDP-alpha-D-glucuronate = 17beta-estradiol 17-O-(beta-D-glucuronate) + UDP + H(+). It carries out the reaction 17beta-hydroxy-5alpha-androstan-3-one + UDP-alpha-D-glucuronate = 5alpha-dihydrotestosterone 17-O-(beta-D-glucuronate) + UDP + H(+). It catalyses the reaction testosterone + UDP-alpha-D-glucuronate = testosterone 17-O-(beta-D-glucuronate) + UDP + H(+). Functionally, UDP-glucuronosyltransferase (UGT) that catalyzes phase II biotransformation reactions in which lipophilic substrates are conjugated with glucuronic acid to increase the metabolite's water solubility, thereby facilitating excretion into either the urine or bile. Catalyzes the glucuronidation of endogenous steroid hormones such as androgens (epitestosterone, androsterone) and estrogens (estradiol, epiestradiol). This chain is UDP-glucuronosyltransferase 2B17, found in Homo sapiens (Human).